The following is a 692-amino-acid chain: Highly divergent homeobox (692 aa).

The homeobox 1 DNA-binding region spans 3–63; it reads LRSVFTVEQQ…NKRRKMSSKS (61 aa). Over residues 117–133 the composition is skewed to polar residues; the sequence is SSSSKQGTTKHTNTQIT. The tract at residues 117–136 is disordered; that stretch reads SSSSKQGTTKHTNTQITEAH. Residues Lys-137, Lys-142, Lys-146, Lys-165, Lys-174, Lys-196, Lys-214, Lys-223, and Lys-234 each participate in a glycyl lysine isopeptide (Lys-Gly) (interchain with G-Cter in SUMO2) cross-link. The homeobox 2 DNA-binding region spans 437–500; it reads ALQDRTQFSD…NRRRKYRLMG (64 aa). 2 disordered regions span residues 505 to 541 and 647 to 692; these read PPRG…DNDR and KDQQ…SDSL. Over residues 676–692 the composition is skewed to polar residues; it reads TSLSVSSLSEKNASDSL.

It is found in the nucleus. This is Highly divergent homeobox (Hdx) from Mus musculus (Mouse).